The chain runs to 177 residues: Large ribosomal subunit protein uL6 (177 aa).

This sequence belongs to the universal ribosomal protein uL6 family. Part of the 50S ribosomal subunit.

Functionally, this protein binds to the 23S rRNA, and is important in its secondary structure. It is located near the subunit interface in the base of the L7/L12 stalk, and near the tRNA binding site of the peptidyltransferase center. This chain is Large ribosomal subunit protein uL6, found in Histophilus somni (strain 129Pt) (Haemophilus somnus).